We begin with the raw amino-acid sequence, 333 residues long: D-alanine--D-alanine ligase (333 aa).

The ATP-grasp domain occupies 124–329; that stretch reads KMWFSALGIR…FAQYLSGNIM (206 aa). 154–209 contacts ATP; the sequence is ALEKWGSIFIKAASQGSSVGCYRVDNKEQLANSLEEAFKYSPYVVVEKTINARELE. Residues aspartate 283, glutamate 296, and asparagine 298 each contribute to the Mg(2+) site.

Belongs to the D-alanine--D-alanine ligase family. Mg(2+) is required as a cofactor. The cofactor is Mn(2+).

It localises to the cytoplasm. It catalyses the reaction 2 D-alanine + ATP = D-alanyl-D-alanine + ADP + phosphate + H(+). Its pathway is cell wall biogenesis; peptidoglycan biosynthesis. Its function is as follows. Cell wall formation. The sequence is that of D-alanine--D-alanine ligase from Shewanella halifaxensis (strain HAW-EB4).